A 221-amino-acid polypeptide reads, in one-letter code: Chaperone protein TorD (221 aa).

The protein belongs to the TorD/DmsD family. TorD subfamily.

The protein resides in the cytoplasm. In terms of biological role, involved in the biogenesis of TorA. Acts on TorA before the insertion of the molybdenum cofactor and, as a result, probably favors a conformation of the apoenzyme that is competent for acquiring the cofactor. This Psychrobacter sp. (strain PRwf-1) protein is Chaperone protein TorD.